A 198-amino-acid polypeptide reads, in one-letter code: Imidazoleglycerol-phosphate dehydratase (198 aa).

It belongs to the imidazoleglycerol-phosphate dehydratase family.

It localises to the cytoplasm. The catalysed reaction is D-erythro-1-(imidazol-4-yl)glycerol 3-phosphate = 3-(imidazol-4-yl)-2-oxopropyl phosphate + H2O. The protein operates within amino-acid biosynthesis; L-histidine biosynthesis; L-histidine from 5-phospho-alpha-D-ribose 1-diphosphate: step 6/9. This is Imidazoleglycerol-phosphate dehydratase from Gluconacetobacter diazotrophicus (strain ATCC 49037 / DSM 5601 / CCUG 37298 / CIP 103539 / LMG 7603 / PAl5).